We begin with the raw amino-acid sequence, 173 residues long: Adenine phosphoribosyltransferase (173 aa).

The protein belongs to the purine/pyrimidine phosphoribosyltransferase family. Homodimer.

It localises to the cytoplasm. The catalysed reaction is AMP + diphosphate = 5-phospho-alpha-D-ribose 1-diphosphate + adenine. Its pathway is purine metabolism; AMP biosynthesis via salvage pathway; AMP from adenine: step 1/1. Functionally, catalyzes a salvage reaction resulting in the formation of AMP, that is energically less costly than de novo synthesis. This chain is Adenine phosphoribosyltransferase, found in Methanococcus vannielii (strain ATCC 35089 / DSM 1224 / JCM 13029 / OCM 148 / SB).